The sequence spans 421 residues: Shaggy-related protein kinase kappa (421 aa).

Residues 1–10 show a composition bias toward gly residues; the sequence is MASSGLGNGV. Residues 1 to 60 form a disordered region; sequence MASSGLGNGVGTSRSAKGLKSSSSSVDWLTRDLAETRIRDKVETDDERDSEPDIIDGAGA. The span at 29 to 42 shows a compositional bias: basic and acidic residues; the sequence is LTRDLAETRIRDKV. Positions 43–54 are enriched in acidic residues; that stretch reads ETDDERDSEPDI. Positions 83–367 constitute a Protein kinase domain; that stretch reads YISEHVVGTG…ALEACIHPLF (285 aa). ATP is bound by residues 89–97 and lysine 112; that span reads VGTGSFGMV. Catalysis depends on aspartate 208, which acts as the Proton acceptor. Tyrosine 243 is modified (phosphotyrosine).

The protein belongs to the protein kinase superfamily. CMGC Ser/Thr protein kinase family. GSK-3 subfamily. Post-translationally, autophosphorylated mainly on threonine and serine residues. As to expression, expressed exclusively in inflorescences.

It carries out the reaction L-seryl-[protein] + ATP = O-phospho-L-seryl-[protein] + ADP + H(+). The catalysed reaction is L-threonyl-[protein] + ATP = O-phospho-L-threonyl-[protein] + ADP + H(+). Its function is as follows. May mediate extracellular signals to regulate transcription in differentiating cells. In Arabidopsis thaliana (Mouse-ear cress), this protein is Shaggy-related protein kinase kappa (ASK10).